A 229-amino-acid chain; its full sequence is Homeobox-leucine zipper protein HOX3 (229 aa).

Positions M1–L82 are disordered. The segment covering G52–E68 has biased composition (acidic residues). Residues H75–Q134 constitute a DNA-binding region (homeobox). The interval K133–H177 is leucine-zipper. The disordered stretch occupies residues A198–F229.

This sequence belongs to the HD-ZIP homeobox family. Class II subfamily. As to quaternary structure, homodimer. May form a heterodimer with HOX1, HOX2 or HOX7. In terms of tissue distribution, expressed in seedlings, roots, leaves, nodes, internodes, flowers and embryo.

The protein localises to the nucleus. Its function is as follows. Probable transcription repressor that binds to the DNA sequence 5'-CAAT[GC]ATTG-3'. The polypeptide is Homeobox-leucine zipper protein HOX3 (HOX3) (Oryza sativa subsp. indica (Rice)).